The sequence spans 1715 residues: MALGSRWRPPPQLPPLLLLLALVAGVRGLEFGGGPGQWARYARWAGAASTGELSFSLRTNATRALLLYLDDGGDCDFLELLLVDGRLRLRFTLSCAEPATLQLDTPVADDRWHMVLLTRDARRTALAVDGEARAAEVRSKRREMQVASDLFVGGIPPDVRLSALTLSTVKYEPPFRGLLANLKLGERPPALLGSQGLRGAAADPLCAPARNPCANGGLCTVLAPGEVGCDCSHTGFGGKFCSEGEHPMEGPAHLTLNSPVGSLLFSEGGAGRGGAGDVHQPTKGKEEFVATFKGNEFFCYDLSHNPIQSSTDEITLAFRTLQRNGLMLHTGKSADYVNLSLKSGAVWLVINLGSGAFEALVEPVNGKFNDNAWHDVRVTRNLRQHAGIGHAMVNKLHYLVTISVDGILTTTGYTQEDYTMLGSDDFFYIGGSPNTADLPGSPVSNNFMGCLKDVVYKNNDFKLELSRLAKEGDPKMKLQGDLSFRCEDVAALDPVTFESPEAFVALPRWSAKRTGSISLDFRTTEPNGLLLFSQGRRAGAGVGSHSSSQRADYFAMELLDGYLYLLLDMGSGGIKLRASSRKVNDGEWCHVDFQRDGRKGSISVNSRSTPFLATGESEVLDLESELYLGGLPEGGRVDLPLPPEVWTAALRAGYVGCVRDLFIDGRSRDLRGLAEAQGAVGVAPFCSRETLKQCASAPCRNGGICREGWNRFVCDCIGTGFLGRVCEREATVLSYDGSMYMKIMLPNAMHTEAEDVSLRFMSQRAYGLMMATTSRESADTLRLELDGGQMKLTVNLDCLRVGCAPSAAGKGPETLFAGHKLNDNEWHTVRVVRRGKSLQLSVDNVTVEGQMAGAHTRLEFHNIETGIMTERRFISVVPSNFIGHLSGLVFNGQPYMDQCKDGDITYCELNARFGLRAIVADPVTFKSRSSYLALATLQAYASMHLFFQFKTTAPDGLLLFNSGNGNDFIVIELVKGYIHYVFDLGNGPSLMKGNSDKPVNDNQWHNVVVSRDPGNVHTLKIDSRTVTQHSNGARNLDLKGELYIGGLSKNMFSNLPKLVASRDGFQGCLASVDLNGRLPDLIADALHRIGQVERGCDGPSTTCTEESCANQGVCLQQWDGFTCDCTMTSYGGPVCNDPGTTYIFGKGGALITYTWPPNDRPSTRMDRLAVGFSTHQRSAVLVRVDSASGLGDYLQLHIDQGTVGVIFNVGTDDITIDEPNAIVSDGKYHVVRFTRSGGNATLQVDSWPVNERYPAGNFDNERLAIARQRIPYRLGRVVDEWLLDKGRQLTIFNSQAAIKIGGRDQGRPFQGQVSGLYYNGLKVLALAAESDPNVRTEGHLRLVGEGPSVLLSAETTATTLLADMATTIMETTTTMATTTTRRGRSPTMRDSTTQNTDDLLVASAECPSDDEDLEECEPSTGGELILPIITEDSLDPPPVATRSPFVPPPPTFYPFLTGVGATQDTLPPPAARRPSSGGPCQAERDDSDCEEPVEASGFASGEVFDSSLPPTDDEDFYTTFPLVTDRTTLLSPRKPAPRPNLRTDGATGAPGVLLAPSAPAPNLPAGKMNHRDPLQPLLENPPLGPGVPTAFEPRRPPPLRPGVTSVPGFPRLPTANPTGPGERGPPGAVEVIRESSSTTGMVVGIVAAAALCILILLYAMYKYRNRDEGSYQVDQSRNYISNSAQSNGAVVKEKAPAAPKTPSKAKKNKDKEYYV.

Positions 1–29 (MALGSRWRPPPQLPPLLLLLALVAGVRGL) are cleaved as a signal peptide. One can recognise a Laminin G-like 1 domain in the interval 30–206 (EFGGGPGQWA…LRGAAADPLC (177 aa)). Topologically, residues 30-1639 (EFGGGPGQWA…EVIRESSSTT (1610 aa)) are extracellular. The N-linked (GlcNAc...) asparagine glycan is linked to Asn60. The 41-residue stretch at 202–242 (ADPLCAPARNPCANGGLCTVLAPGEVGCDCSHTGFGGKFCS) folds into the EGF-like 1 domain. Cystine bridges form between Cys206–Cys219, Cys213–Cys229, and Cys231–Cys241. Laminin G-like domains are found at residues 289–486 (VATF…SFRC) and 493–686 (DPVT…APFC). Asp335 contacts Ca(2+). N-linked (GlcNAc...) asparagine glycosylation occurs at Asn338. 2 residues coordinate Ca(2+): Leu352 and Met420. 5 disulfides stabilise this stretch: Cys450–Cys486, Cys657–Cys686, Cys694–Cys705, Cys699–Cys714, and Cys716–Cys726. The region spanning 690–727 (TLKQCASAPCRNGGICREGWNRFVCDCIGTGFLGRVCE) is the EGF-like 2 domain. 2 Laminin G-like domains span residues 732 to 907 (VLSY…ITYC) and 921 to 1096 (DPVT…ERGC). Ca(2+) contacts are provided by Asp779 and Leu796. N-linked (GlcNAc...) asparagine glycosylation is present at Asn844. Arg857 provides a ligand contact to Ca(2+). Cystine bridges form between Cys1068–Cys1096, Cys1103–Cys1114, Cys1108–Cys1123, and Cys1125–Cys1135. The EGF-like 3 domain maps to 1099–1136 (PSTTCTEESCANQGVCLQQWDGFTCDCTMTSYGGPVCN). One can recognise a Laminin G-like 6 domain in the interval 1140–1348 (TTYIFGKGGA…HLRLVGEGPS (209 aa)). Residues Asp1192 and Val1209 each contribute to the Ca(2+) site. Asn1239 carries an N-linked (GlcNAc...) asparagine glycan. Ca(2+)-binding residues include Ile1291 and Asn1293. O-linked (Xyl...) (heparan sulfate) serine glycosylation occurs at Ser1403. Disordered regions lie at residues 1461-1511 (ATQD…LPPT), 1529-1549 (LLSPRKPAPRPNLRTDGATGA), and 1583-1626 (LGPG…RGPP). Residues 1640 to 1660 (GMVVGIVAAAALCILILLYAM) form a helical membrane-spanning segment. Over 1661–1715 (YKYRNRDEGSYQVDQSRNYISNSAQSNGAVVKEKAPAAPKTPSKAKKNKDKEYYV) the chain is Cytoplasmic. The tract at residues 1682-1715 (NSAQSNGAVVKEKAPAAPKTPSKAKKNKDKEYYV) is disordered.

The protein belongs to the neurexin family. In terms of assembly, the laminin G-like domain 1 binds to NXPH1. Interacts with PATJ. Interacts with CBLN1, CBLN2 and, less avidly, with CBLN4. Specific isoforms bind neuroligins NLGN1, NLGN2 and NLGN3. Isoform 5c/alpha-2C binds to alpha-dystroglycan. Interacts (via Laminin G-like 1 domain) with IGSF21 (Ig-like 1 domain) in a trans-interaction manner. Interacts with CLSTN3. Post-translationally, O-glycosylated; contains heparan sulfate. Heparan sulfate attachment is required for synapse development by mediating interactions with neuroligins. As to expression, brain (neuronal synapse).

Its subcellular location is the presynaptic cell membrane. Its function is as follows. Neuronal cell surface protein that may be involved in cell recognition and cell adhesion. May mediate intracellular signaling. This chain is Neurexin-2 (Nrxn2), found in Rattus norvegicus (Rat).